The sequence spans 171 residues: 3-hydroxydecanoyl-[acyl-carrier-protein] dehydratase (171 aa).

Residue His-70 is part of the active site.

Belongs to the thioester dehydratase family. FabA subfamily. In terms of assembly, homodimer.

The protein resides in the cytoplasm. It catalyses the reaction a (3R)-hydroxyacyl-[ACP] = a (2E)-enoyl-[ACP] + H2O. It carries out the reaction (3R)-hydroxydecanoyl-[ACP] = (2E)-decenoyl-[ACP] + H2O. The catalysed reaction is (2E)-decenoyl-[ACP] = (3Z)-decenoyl-[ACP]. It functions in the pathway lipid metabolism; fatty acid biosynthesis. Functionally, necessary for the introduction of cis unsaturation into fatty acids. Catalyzes the dehydration of (3R)-3-hydroxydecanoyl-ACP to E-(2)-decenoyl-ACP and then its isomerization to Z-(3)-decenoyl-ACP. Can catalyze the dehydratase reaction for beta-hydroxyacyl-ACPs with saturated chain lengths up to 16:0, being most active on intermediate chain length. The protein is 3-hydroxydecanoyl-[acyl-carrier-protein] dehydratase of Pseudomonas syringae pv. tomato (strain ATCC BAA-871 / DC3000).